Here is a 128-residue protein sequence, read N- to C-terminus: MAASKDEILESIANMSVMEVVELIEAMEEKFGVTAAAAVAAAPAAGGGGGDEGGAAEEQTEFDVILSSHGDNKVGVIKAVRGVTGLGLKEAKEVVEGCPAPIKEGASKEEADDIKAKLEEAGASVELK.

It belongs to the bacterial ribosomal protein bL12 family. As to quaternary structure, homodimer. Part of the ribosomal stalk of the 50S ribosomal subunit. Forms a multimeric L10(L12)X complex, where L10 forms an elongated spine to which 2 to 4 L12 dimers bind in a sequential fashion. Binds GTP-bound translation factors.

In terms of biological role, forms part of the ribosomal stalk which helps the ribosome interact with GTP-bound translation factors. Is thus essential for accurate translation. This is Large ribosomal subunit protein bL12 from Halorhodospira halophila (strain DSM 244 / SL1) (Ectothiorhodospira halophila (strain DSM 244 / SL1)).